Consider the following 406-residue polypeptide: Acetamidase (406 aa).

A compositionally biased stretch (low complexity) spans 387–399 (CRPRSSTSTSPRR). A disordered region spans residues 387–406 (CRPRSSTSTSPRRQGPAEGR).

Belongs to the acetamidase/formamidase family.

It carries out the reaction a monocarboxylic acid amide + H2O = a monocarboxylate + NH4(+). The catalysed reaction is acetamide + H2O = acetate + NH4(+). Its function is as follows. Allows acetamide to be used as a sole carbon or nitrogen source. In Mycolicibacterium smegmatis (Mycobacterium smegmatis), this protein is Acetamidase (amdA).